A 547-amino-acid chain; its full sequence is Mitogen-activated protein kinase 15 (547 aa).

A ubiquitin-conjugating region spans residues 1 to 20 (MCAAEVDRHVSQRYLIKRRL). The region spanning 14-305 (YLIKRRLGKG…AEQALQHPYV (292 aa)) is the Protein kinase domain. ATP is bound by residues 20-28 (LGKGAYGIV) and lysine 43. Aspartate 138 functions as the Proton acceptor in the catalytic mechanism. Threonine 176 is modified (phosphothreonine). The short motif at 176–178 (TEY) is the TXY element. At tyrosine 178 the chain carries Phosphotyrosine. A necessary to interact with ESRRA, to regulate its subcellular localization and to inhibit its transcriptional activity region spans residues 266 to 286 (LDALLPPDTPPEALDLLKRLL). Residues 301-380 (QHPYVQRFHC…SQRQSLKPGV (80 aa)) are requires for interaction with GABARAP, MAP1LC3B AND GABARAPL1. The disordered stretch occupies residues 370–503 (ASQRQSLKPG…EAPEPRPGRR (134 aa)). PXXXP motif repeat units follow at residues 378-382 (PGVLP) and 385-389 (LAETP). 2 PXXXP motif; regulates binding with chromatin and interaction with PCNA repeats span residues 393–397 (RGPKP) and 401–405 (HGHDP). The span at 401-414 (HGHDPEHVEVRRQS) shows a compositional bias: basic and acidic residues. Arginine 449 is modified (omega-N-methylarginine). The segment covering 454–465 (SLTSQAAAQAAN) has biased composition (polar residues). Low complexity predominate over residues 481–490 (AVGARRVPSR). The segment covering 491–500 (LPREAPEPRP) has biased composition (basic and acidic residues).

It belongs to the protein kinase superfamily. CMGC Ser/Thr protein kinase family. MAP kinase subfamily. Interacts with CSK/c-Src, ABL1, RET and TGFB1I1. Interacts with GABARAP, MAP1LC3B and GABARAPL1; controls, in a kinase-dependent fashion, both basal and starvation-induced autophagy. Interacts with ESRRA; promotes re-localization of ESRRA to the cytoplasm through a XPO1-dependent mechanism then inhibits ESRRA transcriptional activity. Interacts with PCNA; the interaction is chromatin binding- and kinase activity-dependent and prevents MDM2-mediated PCNA destruction by inhibiting the association of PCNA with MDM2. Interacts with DVL2. Interacts with CLIC3; MAPK15 does not phosphorylates CLIC3. Post-translationally, autophosphorylated on Thr-176 and Tyr-178; activates the enzyme. In terms of processing, dephosphorylated by PTPN1. Ubiquitinated. Ubiquitination may allow its tight kinase activity regulation and rapid turnover. May be ubiquitinated by a SCF E3 ligase. In terms of tissue distribution, ubiquitously expressed at a weak level. Highest expression is found in testis and to a lower extent in lung.

It localises to the cytoplasm. It is found in the cytoskeleton. Its subcellular location is the cilium basal body. The protein resides in the cell junction. The protein localises to the tight junction. It localises to the microtubule organizing center. It is found in the centrosome. Its subcellular location is the centriole. The protein resides in the cytoplasmic vesicle. The protein localises to the autophagosome. It localises to the golgi apparatus. It is found in the nucleus. Its subcellular location is the spindle. The enzyme catalyses L-seryl-[protein] + ATP = O-phospho-L-seryl-[protein] + ADP + H(+). It carries out the reaction L-threonyl-[protein] + ATP = O-phospho-L-threonyl-[protein] + ADP + H(+). Activated by threonine and tyrosine phosphorylation. Inhibited by dual specificity phosphatases, such as DUSP1. Phosphorylation and activation in response to DNA damaging agents, serum stimulation. Constitutively activated when phosphorylated on Tyr-178. Activity depends on the relative rates of MAPK15 autophosphorylation and dephosphorylation by PTPN1. Atypical MAPK protein that regulates several process such as autophagy, ciliogenesis, protein trafficking/secretion and genome integrity, in a kinase activity-dependent manner. Controls both, basal and starvation-induced autophagy throught its interaction with GABARAP, MAP1LC3B and GABARAPL1 leading to autophagosome formation, SQSTM1 degradation and reduced MAP1LC3B inhibitory phosphorylation. Regulates primary cilium formation and the localization of ciliary proteins involved in cilium structure, transport, and signaling. Prevents the relocation of the sugar-adding enzymes from the Golgi to the endoplasmic reticulum, thereby restricting the production of sugar-coated proteins. Upon amino-acid starvation, mediates transitional endoplasmic reticulum site disassembly and inhibition of secretion. Binds to chromatin leading to MAPK15 activation and interaction with PCNA, that which protects genomic integrity by inhibiting MDM2-mediated degradation of PCNA. Regulates DA transporter (DAT) activity and protein expression via activation of RhoA. In response to H(2)O(2) treatment phosphorylates ELAVL1, thus preventing it from binding to the PDCD4 3'UTR and rendering the PDCD4 mRNA accessible to miR-21 and leading to its degradation and loss of protein expression. Also functions in a kinase activity-independent manner as a negative regulator of growth. Phosphorylates in vitro FOS and MBP. During oocyte maturation, plays a key role in the microtubule organization and mei- otic cell cycle progression in oocytes, fertilized eggs, and early embryos. Interacts with ESRRA promoting its re-localization from the nucleus to the cytoplasm and then prevents its transcriptional activity. In Rattus norvegicus (Rat), this protein is Mitogen-activated protein kinase 15 (Mapk15).